The chain runs to 352 residues: tRNA-specific 2-thiouridylase MnmA (352 aa).

ATP contacts are provided by residues 6-13 (AMSGGVDS) and Leu-32. The Nucleophile role is filled by Cys-101. Cys-101 and Cys-194 are joined by a disulfide. Gly-125 is an ATP binding site. Residues 144-146 (KDQ) are interaction with tRNA. The Cysteine persulfide intermediate role is filled by Cys-194.

It belongs to the MnmA/TRMU family.

The protein localises to the cytoplasm. The enzyme catalyses S-sulfanyl-L-cysteinyl-[protein] + uridine(34) in tRNA + AH2 + ATP = 2-thiouridine(34) in tRNA + L-cysteinyl-[protein] + A + AMP + diphosphate + H(+). Functionally, catalyzes the 2-thiolation of uridine at the wobble position (U34) of tRNA, leading to the formation of s(2)U34. The protein is tRNA-specific 2-thiouridylase MnmA of Frankia casuarinae (strain DSM 45818 / CECT 9043 / HFP020203 / CcI3).